A 64-amino-acid chain; its full sequence is Large ribosomal subunit protein bL35 (64 aa).

Residues 1–14 (MKNKTHKGTAKRVK) show a composition bias toward basic residues. The segment at 1 to 29 (MKNKTHKGTAKRVKVTGSGKLVREQANRR) is disordered.

Belongs to the bacterial ribosomal protein bL35 family.

The sequence is that of Large ribosomal subunit protein bL35 from Corynebacterium glutamicum (strain R).